Consider the following 132-residue polypeptide: Small ribosomal subunit protein uS11 (132 aa).

Belongs to the universal ribosomal protein uS11 family. Part of the 30S ribosomal subunit. Interacts with proteins S7 and S18. Binds to IF-3.

Located on the platform of the 30S subunit, it bridges several disparate RNA helices of the 16S rRNA. Forms part of the Shine-Dalgarno cleft in the 70S ribosome. This Chlamydia muridarum (strain MoPn / Nigg) protein is Small ribosomal subunit protein uS11.